We begin with the raw amino-acid sequence, 110 residues long: Subtilisin inhibitor-like protein 1 (110 aa).

2 disulfides stabilise this stretch: Cys30–Cys44 and Cys68–Cys98.

Belongs to the protease inhibitor I16 (SSI) family. As to quaternary structure, homodimer.

The protein localises to the secreted. In terms of biological role, strong inhibitor of subtilisin BPN'. This chain is Subtilisin inhibitor-like protein 1, found in Streptomyces cacaoi.